We begin with the raw amino-acid sequence, 222 residues long: uncharacterized protein (222 aa).

N-linked (GlcNAc...) asparagine; by host glycans are attached at residues Asn4, Asn75, Asn84, Asn104, Asn170, and Asn175. Residues 200–220 (LIIIIGIVIILLLIIVMIKTV) traverse the membrane as a helical segment.

It localises to the membrane. This is an uncharacterized protein from Acanthamoeba polyphaga (Amoeba).